The chain runs to 1565 residues: Synemin (1565 aa).

Residues 1–10 form a head region; that stretch reads MLSWRLQTGP. A coil 1A region spans residues 11-49; sequence EKAELQELNARLYDYVCRVRELERENLLLEEELRGRRGR. The segment at 11–320 is interaction with DMD and UTRN; the sequence is EKAELQELNA…YRALLEGESN (310 aa). Residues 11–322 form the IF rod domain; it reads EKAELQELNA…ALLEGESNPE (312 aa). Residues 50–58 form a linker 1 region; sequence EGLWAEGQA. Residues 59 to 163 form a coil 1B region; it reads RCAEEARSLR…ELRARAASLT (105 aa). Residues 164–186 form a linker 12 region; the sequence is MHFRARATGPAAPPPRLREVHDS. The interval 187–300 is coil 2; the sequence is YALLVAESWR…LRDYQDLLQV (114 aa). The tail stretch occupies residues 301-1565; it reads KTGLSLEVAT…EEEENDGHWF (1265 aa). Residues 401 to 421 form a disordered region; it reads SGYSSSATTQQENSYGKAVSS. Over residues 402–421 the composition is skewed to polar residues; the sequence is GYSSSATTQQENSYGKAVSS. Phosphoserine is present on Ser429. The interval 472 to 609 is disordered; it reads YRDRRDKVAA…VKDAGGGTGR (138 aa). Over residues 498–577 the composition is skewed to basic and acidic residues; it reads KKTEVKATRE…KEKSVREREV (80 aa). Residues Thr598 and Thr651 each carry the phosphothreonine modification. Residues Ser653 and Ser777 each carry the phosphoserine modification. Residues 1019-1040 are compositionally biased toward basic and acidic residues; it reads LSKDEASEMEKAVESVVRESLS. Residues 1019 to 1060 form a disordered region; the sequence is LSKDEASEMEKAVESVVRESLSRQRSPAPGSPDEEGGAEAPA. Residues Ser1044, Ser1049, Ser1077, Ser1087, Ser1181, and Ser1184 each carry the phosphoserine modification. Residues 1080-1105 form a disordered region; that stretch reads SEVAGGASHSSGQRTPQGPVSATVEV. Residues 1087–1105 show a composition bias toward polar residues; the sequence is SHSSGQRTPQGPVSATVEV. Residues 1152 to 1463 form an interaction with TLN1 and VCL region; sequence VSAGGDLSQA…GPKETSFTFQ (312 aa). Disordered stretches follow at residues 1198 to 1221 and 1332 to 1415; these read EAWG…GRHS and QLGE…ETSE. The interval 1244-1563 is interaction with DMD and UTRN; the sequence is GKVGDYFATE…DNEEEENDGH (320 aa). The segment covering 1354 to 1379 has biased composition (polar residues); the sequence is ATHSHTSGRQTVMTEKSTFQSVVSES. Ser1435 carries the phosphoserine modification. Arg1487 carries the omega-N-methylarginine modification. Residues 1505 to 1525 are disordered; the sequence is FKASAGEGDQAHREQGKEQAM. The segment covering 1513–1525 has biased composition (basic and acidic residues); the sequence is DQAHREQGKEQAM.

This sequence belongs to the intermediate filament family. As to quaternary structure, interacts with GFAP and VIM. Isoform 1 interacts with TLN1 and VCL. Isoform 2 interacts with DES and DTNA. Isoform 1 and isoform 2 interact with DMD and UTRN. As to expression, isoform 2 is strongly detected in adult heart, fetal skeletal muscles and fetal heart. Isoform 1 is weakly detected in fetal heart and also in fetal skeletal muscle. Isoform 1 and isoform 2 are detected in adult bladder (at protein level). The mRNA is predominantly expressed in heart and muscle with some expression in brain which may be due to tissue-specific isoforms.

It localises to the cytoplasm. The protein localises to the cytoskeleton. It is found in the cell junction. The protein resides in the adherens junction. Its function is as follows. Type-VI intermediate filament (IF) which plays an important cytoskeletal role within the muscle cell cytoskeleton. It forms heteromeric IFs with desmin and/or vimentin, and via its interaction with cytoskeletal proteins alpha-dystrobrevin, dystrophin, talin-1, utrophin and vinculin, is able to link these heteromeric IFs to adherens-type junctions, such as to the costameres, neuromuscular junctions, and myotendinous junctions within striated muscle cells. In Homo sapiens (Human), this protein is Synemin.